The following is a 224-amino-acid chain: Paired immunoglobulin-like type 2 receptor beta (224 aa).

An N-terminal signal peptide occupies residues 1–28; sequence MALLISLPGGTPAMAQVLLLLSSGCLHA. Topologically, residues 29-195 are extracellular; it reads GNSERYNRKN…NPSLMNLGAM (167 aa). 3 N-linked (GlcNAc...) asparagine glycosylation sites follow: Asn90, Asn107, and Asn154. The chain crosses the membrane as a helical span at residues 196–216; sequence VTMLLAKVLVIVLVYGWMIFL. The Cytoplasmic portion of the chain corresponds to 217 to 224; sequence RWKQRPAH.

In terms of assembly, interacts with CD99. Probably associates with DAP12. As to expression, widely expressed with highest levels in spleen, liver and lung. Predominantly expressed by natural killer cells, macrophages, and granulocytes and dendritic cells (BM-DC).

The protein localises to the membrane. Its function is as follows. Paired receptors consist of highly related activating and inhibitory receptors and are widely involved in the regulation of the immune system. PILRB is thought to act as a cellular signaling activating receptor that associates with ITAM-bearing adapter molecules on the cell surface. Seems to associate with DAP12 and is a receptor for CD99. May be involved in target cell recognition by natural killer cells and in activation of dendritic cells. The sequence is that of Paired immunoglobulin-like type 2 receptor beta (Pilrb) from Mus musculus (Mouse).